The following is a 764-amino-acid chain: Myotubularin-related protein 10-B (764 aa).

One can recognise a Myotubularin phosphatase domain in the interval 208–649 (FESYSDWDRE…THIQIWKLCY (442 aa)).

It belongs to the protein-tyrosine phosphatase family. Non-receptor class myotubularin subfamily.

The chain is Myotubularin-related protein 10-B (mtmr10-b) from Xenopus laevis (African clawed frog).